A 255-amino-acid chain; its full sequence is Imidazole glycerol phosphate synthase subunit HisF (255 aa).

Active-site residues include aspartate 12 and aspartate 131.

It belongs to the HisA/HisF family. Heterodimer of HisH and HisF.

It localises to the cytoplasm. It carries out the reaction 5-[(5-phospho-1-deoxy-D-ribulos-1-ylimino)methylamino]-1-(5-phospho-beta-D-ribosyl)imidazole-4-carboxamide + L-glutamine = D-erythro-1-(imidazol-4-yl)glycerol 3-phosphate + 5-amino-1-(5-phospho-beta-D-ribosyl)imidazole-4-carboxamide + L-glutamate + H(+). Its pathway is amino-acid biosynthesis; L-histidine biosynthesis; L-histidine from 5-phospho-alpha-D-ribose 1-diphosphate: step 5/9. IGPS catalyzes the conversion of PRFAR and glutamine to IGP, AICAR and glutamate. The HisF subunit catalyzes the cyclization activity that produces IGP and AICAR from PRFAR using the ammonia provided by the HisH subunit. The protein is Imidazole glycerol phosphate synthase subunit HisF of Ignicoccus hospitalis (strain KIN4/I / DSM 18386 / JCM 14125).